Consider the following 436-residue polypeptide: Aminopeptidase C (436 aa).

Catalysis depends on residues C68, H356, and N378.

It belongs to the peptidase C1 family. Homohexamer.

The catalysed reaction is Inactivates bleomycin B2 (a cytotoxic glycometallopeptide) by hydrolysis of a carboxyamide bond of beta-aminoalanine, but also shows general aminopeptidase activity. The specificity varies somewhat with source, but amino acid arylamides of Met, Leu and Ala are preferred.. In terms of biological role, hydrolyzes naphthylamide-substituted amino acids as well as di- and tripeptides in which the half-cystine residue is involved in a disulfide loop, notably in oxytocin and vasopressin. Also has a bleomycin hydrolase activity. The sequence is that of Aminopeptidase C (pepC) from Lactococcus lactis subsp. lactis (strain IL1403) (Streptococcus lactis).